We begin with the raw amino-acid sequence, 140 residues long: Large ribosomal subunit protein uL11 (140 aa).

This sequence belongs to the universal ribosomal protein uL11 family. In terms of assembly, part of the ribosomal stalk of the 50S ribosomal subunit. Interacts with L10 and the large rRNA to form the base of the stalk. L10 forms an elongated spine to which L12 dimers bind in a sequential fashion forming a multimeric L10(L12)X complex. Post-translationally, one or more lysine residues are methylated.

Forms part of the ribosomal stalk which helps the ribosome interact with GTP-bound translation factors. The polypeptide is Large ribosomal subunit protein uL11 (Staphylococcus epidermidis (strain ATCC 35984 / DSM 28319 / BCRC 17069 / CCUG 31568 / BM 3577 / RP62A)).